The sequence spans 169 residues: Disulfide bond formation protein B (169 aa).

The Cytoplasmic portion of the chain corresponds to 1–8 (MRLSVRWV). A helical transmembrane segment spans residues 9 to 25 (FFLGFFLCALMLAIAGY). Over 26–43 (FQFVENLEPCPLCILSRV) the chain is Periplasmic. Cys-35 and Cys-38 are oxidised to a cystine. Residues 44–60 (AVLAIGGVFLVAALHNP) form a helical membrane-spanning segment. Over 61-67 (KSWGIKV) the chain is Cytoplasmic. Residues 68–84 (YALLGFVVTLIGIGITG) form a helical membrane-spanning segment. Residues 85–141 (RHVWLQSLPADQVPACGPGLNFMLDNFPLTETLELVFRGSGECAEVQWSFLGLTIPG) are Periplasmic-facing. Residues Cys-100 and Cys-127 are joined by a disulfide bond. A helical transmembrane segment spans residues 142-160 (WTLVAFLFLGVISLWQMGR). Residues 161–169 (TGGGAGKLT) lie on the Cytoplasmic side of the membrane.

Belongs to the DsbB family.

Its subcellular location is the cell inner membrane. Its function is as follows. Required for disulfide bond formation in some periplasmic proteins. Acts by oxidizing the DsbA protein. This Nitrosococcus oceani (strain ATCC 19707 / BCRC 17464 / JCM 30415 / NCIMB 11848 / C-107) protein is Disulfide bond formation protein B.